The sequence spans 232 residues: tRNA (guanine-N(1)-)-methyltransferase (232 aa).

S-adenosyl-L-methionine is bound by residues glycine 111 and 131-136 (IGDYIL).

Belongs to the RNA methyltransferase TrmD family. Homodimer.

Its subcellular location is the cytoplasm. It carries out the reaction guanosine(37) in tRNA + S-adenosyl-L-methionine = N(1)-methylguanosine(37) in tRNA + S-adenosyl-L-homocysteine + H(+). Its function is as follows. Specifically methylates guanosine-37 in various tRNAs. In Bartonella bacilliformis (strain ATCC 35685 / KC583 / Herrer 020/F12,63), this protein is tRNA (guanine-N(1)-)-methyltransferase.